A 466-amino-acid polypeptide reads, in one-letter code: Glutamate--tRNA ligase (466 aa).

The short motif at 10 to 20 is the 'HIGH' region element; it reads PSPTGFLHIGG. Positions 252–256 match the 'KMSKS' region motif; the sequence is KLSKR. Residue Lys255 participates in ATP binding.

Belongs to the class-I aminoacyl-tRNA synthetase family. Glutamate--tRNA ligase type 1 subfamily. Monomer.

The protein resides in the cytoplasm. The enzyme catalyses tRNA(Glu) + L-glutamate + ATP = L-glutamyl-tRNA(Glu) + AMP + diphosphate. Its function is as follows. Catalyzes the attachment of glutamate to tRNA(Glu) in a two-step reaction: glutamate is first activated by ATP to form Glu-AMP and then transferred to the acceptor end of tRNA(Glu). The chain is Glutamate--tRNA ligase from Mycoplasmopsis synoviae (strain 53) (Mycoplasma synoviae).